Consider the following 766-residue polypeptide: Subtilisin-like protease SBT3.13 (766 aa).

The N-terminal stretch at 1-21 is a signal peptide; that stretch reads MNNSLQSSKLVLLLAIALVLF. The propeptide at 22 to 120 is activation peptide; it reads LNTELDFLTA…VIPNRIRKLK (99 aa). In terms of domain architecture, Inhibitor I9 spans 41–119; the sequence is VYIVYLGERE…HVIPNRIRKL (79 aa). Residues 134-618 form the Peptidase S8 domain; the sequence is PTSFSSLSSV…GGLVNPEKAA (485 aa). Asp-162 acts as the Charge relay system in catalysis. Asn-195 and Asn-223 each carry an N-linked (GlcNAc...) asparagine glycan. His-239 acts as the Charge relay system in catalysis. Residues Asn-254 and Asn-389 are each glycosylated (N-linked (GlcNAc...) asparagine). Ser-549 functions as the Charge relay system in the catalytic mechanism. The N-linked (GlcNAc...) asparagine glycan is linked to Asn-641.

Belongs to the peptidase S8 family.

The protein resides in the secreted. The sequence is that of Subtilisin-like protease SBT3.13 from Arabidopsis thaliana (Mouse-ear cress).